A 201-amino-acid chain; its full sequence is uncharacterized protein (201 aa).

This is an uncharacterized protein from Bacillus subtilis (strain 168).